The sequence spans 466 residues: Glutamate-1-semialdehyde 2,1-aminomutase (466 aa).

N6-(pyridoxal phosphate)lysine is present on K292.

The protein belongs to the class-III pyridoxal-phosphate-dependent aminotransferase family. HemL subfamily. As to quaternary structure, homodimer. Requires pyridoxal 5'-phosphate as cofactor.

Its subcellular location is the cytoplasm. The enzyme catalyses (S)-4-amino-5-oxopentanoate = 5-aminolevulinate. It participates in porphyrin-containing compound metabolism; protoporphyrin-IX biosynthesis; 5-aminolevulinate from L-glutamyl-tRNA(Glu): step 2/2. The chain is Glutamate-1-semialdehyde 2,1-aminomutase from Tropheryma whipplei (strain TW08/27) (Whipple's bacillus).